The primary structure comprises 288 residues: MDVTAKYELIGLMAYPIRHSLSPEMQNKALEKAGLPYTYMAFEVDNTTFASAIEGLKALKMRGTGVSMPNKQLACEYVDELTPAAKLVGAINTIVNDDGYLRGYNTDGTGHIRAIKESGFDIRGKTMVLLGAGGAATAIGAQAAIEGIKEIKLFNRKDDFFEKAVAFAKRVNENTDCVVTVTDLADQHAFTEALASADILTNGTKVGMKPLENESLIGDVSLLRPELLVTECVYNPHMTKLLQQAQQAGCKTIDGYGMLLWQGAEQFELWTGKAFPLDYVKQVMGFTA.

The substrate site is built by K71 and D107. Residues 132–135, 155–158, K205, 232–235, and G255 contribute to the NAD(+) site; these read AGGA, NRKD, and CVYN.

The protein belongs to the shikimate dehydrogenase family. Homodimer.

It catalyses the reaction L-quinate + NAD(+) = 3-dehydroquinate + NADH + H(+). The enzyme catalyses L-quinate + NADP(+) = 3-dehydroquinate + NADPH + H(+). It carries out the reaction shikimate + NADP(+) = 3-dehydroshikimate + NADPH + H(+). The catalysed reaction is shikimate + NAD(+) = 3-dehydroshikimate + NADH + H(+). The protein operates within metabolic intermediate biosynthesis; chorismate biosynthesis; chorismate from D-erythrose 4-phosphate and phosphoenolpyruvate: step 4/7. Functionally, the actual biological function of YdiB remains unclear, nor is it known whether 3-dehydroshikimate or quinate represents the natural substrate. Catalyzes the reversible NAD-dependent reduction of both 3-dehydroshikimate (DHSA) and 3-dehydroquinate to yield shikimate (SA) and quinate, respectively. It can use both NAD or NADP for catalysis, however it has higher catalytic efficiency with NAD. This Salmonella agona (strain SL483) protein is Quinate/shikimate dehydrogenase.